Consider the following 165-residue polypeptide: Lipoprotein signal peptidase (165 aa).

Helical transmembrane passes span 66 to 86 (WQFW…LSLT) and 91 to 111 (NEPV…GNLV). Residues D121 and D139 contribute to the active site. A helical transmembrane segment spans residues 132–152 (WPAFNVADIAICIGAFLAFVA).

It belongs to the peptidase A8 family.

The protein resides in the cell inner membrane. The catalysed reaction is Release of signal peptides from bacterial membrane prolipoproteins. Hydrolyzes -Xaa-Yaa-Zaa-|-(S,diacylglyceryl)Cys-, in which Xaa is hydrophobic (preferably Leu), and Yaa (Ala or Ser) and Zaa (Gly or Ala) have small, neutral side chains.. Its pathway is protein modification; lipoprotein biosynthesis (signal peptide cleavage). This protein specifically catalyzes the removal of signal peptides from prolipoproteins. In Nitratidesulfovibrio vulgaris (strain DP4) (Desulfovibrio vulgaris), this protein is Lipoprotein signal peptidase.